Reading from the N-terminus, the 303-residue chain is MPKPHQVQVIKDRETQLREQQEAESKRRTYRDVKEETRKKHKKAHFEASPTPEESTSDKISLPRKRYYRQRAHSNPFSDHRLEYPRSPDDMNWEKLFPGFYDEETKQMTSSVEIADVGCGYGGLLTKLAPEFPNSLILGMEIRVQVTQYVEDRIIALRNKHEDEDVNFQNIAVLRGNAMKFLPNFFRKGQLSKMFFCFPDPHFKQRKHKARIITNTLLSEYAYVLKEGGVVYTITDVEDLHNWMVKHLEEHPLFERLSKEWEEQDTCVSIMFNSTEEGQKVTRNKGSKWIACYRRLPNPEECV.

The disordered stretch occupies residues 1–64 (MPKPHQVQVI…STSDKISLPR (64 aa)). The segment covering 10–38 (IKDRETQLREQQEAESKRRTYRDVKEETR) has biased composition (basic and acidic residues). Residues Gly-118, 141 to 142 (EI), 177 to 178 (NA), and Cys-197 contribute to the S-adenosyl-L-methionine site. The active site involves Asp-200. 275–277 (TEE) is a binding site for S-adenosyl-L-methionine.

It belongs to the class I-like SAM-binding methyltransferase superfamily. TrmB family. In terms of assembly, forms a complex with TRM82.

It is found in the nucleus. It carries out the reaction guanosine(46) in tRNA + S-adenosyl-L-methionine = N(7)-methylguanosine(46) in tRNA + S-adenosyl-L-homocysteine. It functions in the pathway tRNA modification; N(7)-methylguanine-tRNA biosynthesis. In terms of biological role, catalyzes the formation of N(7)-methylguanine at position 46 (m7G46) in tRNA. The polypeptide is tRNA (guanine-N(7)-)-methyltransferase (Scheffersomyces stipitis (strain ATCC 58785 / CBS 6054 / NBRC 10063 / NRRL Y-11545) (Yeast)).